The chain runs to 1404 residues: Proteoglycan 4 (1404 aa).

The signal sequence occupies residues 1 to 24 (MAWKTLPIYLLLLLSVFVIQQVSS). 2 consecutive SMB domains span residues 26 to 69 (DLSS…AELS) and 66 to 108 (AELS…AEVH). Intrachain disulfides connect Cys30-Cys34, Cys30-Cys46, Cys34-Cys64, Cys44-Cys46, Cys44-Cys57, Cys50-Cys56, Cys57-Cys64, Cys70-Cys74, Cys70-Cys86, Cys74-Cys104, Cys84-Cys86, Cys84-Cys97, Cys90-Cys96, and Cys97-Cys104. A disordered region spans residues 111–966 (TSPPSSKKAP…TTQVTSTTTQ (856 aa)). O-linked (GalNAc...) serine glycans are attached at residues Ser123 and Ser136. Over residues 132–146 (TTKRSPKPPNKKKTK) the composition is skewed to basic residues. The span at 166–177 (SSSSSSSSSSSS) shows a compositional bias: low complexity. Over residues 193 to 205 (ELQKKLKVKDNKK) the composition is skewed to basic and acidic residues. A glycan (N-linked (GlcNAc...) asparagine) is linked at Asn206. Positions 235 to 252 (TPDTSTTQHNKVSTSPKI) are enriched in polar residues. O-linked (GalNAc...) threonine glycosylation is found at Thr240 and Thr253. Positions 266–276 (PNSDTSKETSL) are enriched in polar residues. O-linked (GalNAc...) threonine glycosylation is found at Thr277, Thr291, and Thr305. Ser306 carries O-linked (GalNAc...) serine glycosylation. An O-linked (GalNAc...) threonine glycan is attached at Thr310. O-linked (GalNAc...) serine glycosylation occurs at Ser317. Residues Thr324, Thr332, and Thr338 are each glycosylated (O-linked (GalNAc...) threonine). Composition is skewed to low complexity over residues 329 to 348 (AKPT…TTPK) and 356 to 405 (KEPA…KEPA). Copy 1 of the repeat occupies 348–355 (KEPTPTTP). The segment at 348 to 855 (KEPTPTTPKE…TPETPPPTTS (508 aa)) is 59 X 8 AA repeats of K-X-P-X-P-T-T-X. A 2; approximate repeat occupies 356-363 (KEPASTTP). Copy 3 of the repeat occupies 364-371 (KEPTPTTI). A glycan (O-linked (GalNAc...) threonine) is linked at Thr367. The 4; approximate repeat unit spans residues 372-378 (KSAPTTP). An O-linked (GalNAc...) serine glycan is attached at Ser373. Thr376, Thr384, and Thr385 each carry an O-linked (GalNAc...) threonine glycan. Repeat 5 spans residues 379–386 (KEPAPTTT). The stretch at 387–393 (KSAPTTP) is one 6; approximate repeat. Residue Ser388 is glycosylated (O-linked (GalNAc...) serine). 7 O-linked (GalNAc...) threonine glycosylation sites follow: Thr391, Thr399, Thr400, Thr407, Thr408, Thr415, and Thr423. Tandem repeats lie at residues 394–401 (KEPAPTTT), 402–409 (KEPAPTTP), 410–417 (KEPAPTTT), and 418–425 (KEPAPTTT). Over residues 413-431 (APTTTKEPAPTTTKSAPTT) the composition is skewed to low complexity. The stretch at 426–432 (KSAPTTP) is one 11; approximate repeat. O-linked (GalNAc...) serine glycosylation occurs at Ser427. 7 O-linked (GalNAc...) threonine glycosylation sites follow: Thr430, Thr438, Thr439, Thr446, Thr447, Thr454, and Thr455. Composition is skewed to pro residues over residues 432 to 467 (PKEP…PKEP) and 476 to 506 (PTTP…PKEP). A run of 4 repeats spans residues 433 to 440 (KEPAPTTP), 441 to 448 (KKPAPTTP), 449 to 456 (KEPAPTTP), and 457 to 464 (KEPTPTTP). The stretch at 465–471 (KEPAPTT) is one 16; approximate repeat. The stretch at 472 to 479 (KEPAPTTP) is repeat 17. Residues Thr477, Thr478, Thr485, Thr493, Thr494, Thr501, Thr502, and Thr509 are each glycosylated (O-linked (GalNAc...) threonine). An 18; approximate repeat occupies 480 to 487 (KEPAPTAP). A 19; approximate repeat occupies 488–495 (KKPAPTTP). 4 tandem repeats follow at residues 496-503 (KEPAPTTP), 504-511 (KEPAPTTT), 512-519 (KEPSPTTP), and 520-527 (KEPAPTTT). Residues 523–561 (APTTTKSAPTTTKEPAPTTTKSAPTTPKEPSPTTTKEPA) show a composition bias toward low complexity. O-linked (GalNAc...) threonine glycosylation is present at Thr525. The stretch at 528-534 (KSAPTTT) is one 24; approximate repeat. Ser529 carries O-linked (GalNAc...) serine glycosylation. O-linked (GalNAc...) threonine glycosylation is found at Thr532, Thr540, and Thr541. Copy 25 of the repeat occupies 535 to 542 (KEPAPTTT). The stretch at 543–549 (KSAPTTP) is one 26; approximate repeat. 6 tandem repeats follow at residues 550–557 (KEPSPTTT), 558–565 (KEPAPTTP), 566–573 (KEPAPTTP), 574–581 (KKPAPTTP), 582–589 (KEPAPTTP), and 590–597 (KEPAPTTT). Ser553 is a glycosylation site (O-linked (GalNAc...) serine). O-linked (GalNAc...) threonine glycans are attached at residues Thr555, Thr563, Thr564, Thr571, Thr572, Thr579, Thr580, Thr587, Thr588, Thr595, Thr603, Thr604, Thr611, Thr612, Thr616, Thr619, and Thr627. The span at 562 to 592 (PTTPKEPAPTTPKKPAPTTPKEPAPTTPKEP) shows a compositional bias: pro residues. One copy of the 33; approximate repeat lies at 598–605 (KKPAPTTP). A compositionally biased stretch (pro residues) spans 602–611 (PTTPKEPAPT). Repeat unit 34 spans residues 606-613 (KEPAPTTP). Over residues 612 to 636 (TPKETAPTTPKKLTPTTPEKLAPTT) the composition is skewed to low complexity. One copy of the 35; approximate repeat lies at 614-621 (KETAPTTP). The stretch at 622–629 (KKLTPTTP) is one 36; approximate repeat. One copy of the 37; approximate repeat lies at 638–645 (EKPAPTTP). Positions 653–667 (PEEPTPTTPEEPAPT) are enriched in pro residues. The 38; approximate repeat unit spans residues 662 to 669 (EEPAPTTP). O-linked (GalNAc...) threonine glycosylation is found at Thr676, Thr683, Thr684, Thr691, Thr692, Thr699, Thr700, Thr704, and Thr707. A compositionally biased stretch (pro residues) spans 677 to 699 (PKEPAPTTPKEPAPTTPKEPAPT). Tandem repeats lie at residues 678 to 685 (KEPAPTTP), 686 to 693 (KEPAPTTP), and 694 to 701 (KEPAPTTP). Positions 700–721 (TPKETAPTTPKGTAPTTLKEPA) are enriched in low complexity. A 42; approximate repeat occupies 702-709 (KETAPTTP). Residues 710–717 (KGTAPTTL) form a 43; approximate repeat. The stretch at 718-725 (KEPAPTTP) is repeat 44. O-linked (GalNAc...) threonine glycosylation is found at Thr723, Thr724, and Thr736. Low complexity predominate over residues 728–761 (PAPKELAPTTTKEPTSTTSDKPAPTTPKGTAPTT). The stretch at 731-738 (KELAPTTT) is one 45; approximate repeat. The stretch at 739-746 (KEPTSTTS) is one 46; approximate repeat. The stretch at 747-754 (DKPAPTTP) is one 47; approximate repeat. The 48; approximate repeat unit spans residues 755 to 762 (KGTAPTTP). Residues 762 to 776 (PKEPAPTTPKEPAPT) are compositionally biased toward pro residues. A run of 2 repeats spans residues 763-770 (KEPAPTTP) and 771-778 (KEPAPTTP). 4 O-linked (GalNAc...) threonine glycosylation sites follow: Thr768, Thr769, Thr776, and Thr777. The span at 777-790 (TPKGTAPTTLKEPA) shows a compositional bias: low complexity. One copy of the 51; approximate repeat lies at 779 to 786 (KGTAPTTL). Repeat unit 52 spans residues 787 to 794 (KEPAPTTP). Residues Thr792, Thr793, and Thr805 are each glycosylated (O-linked (GalNAc...) threonine). Residues 797 to 830 (PAPKELAPTTTKGPTSTTSDKPAPTTPKETAPTT) show a composition bias toward low complexity. Residues 800-807 (KELAPTTT) form a 53; approximate repeat. A 54; approximate repeat occupies 808 to 815 (KGPTSTTS). Ser812 carries an O-linked (GalNAc...) serine glycan. A 55; approximate repeat occupies 816–823 (DKPAPTTP). One copy of the 56; approximate repeat lies at 824–831 (KETAPTTP). O-linked (GalNAc...) threonine glycans are attached at residues Thr829, Thr837, and Thr838. Positions 831–853 (PKEPAPTTPKKPAPTTPETPPPT) are enriched in pro residues. 2 tandem repeats follow at residues 832 to 839 (KEPAPTTP) and 840 to 847 (KKPAPTTP). One copy of the 59; approximate repeat lies at 848-855 (ETPPPTTS). Residues 854–866 (TSEVSTPTTTKEP) show a composition bias toward low complexity. O-linked (GalNAc...) serine glycosylation is present at Ser892. Over residues 899–914 (PTTKTPAATKPEMTTT) the composition is skewed to low complexity. O-linked (GalNAc...) threonine glycosylation occurs at Thr900. Over residues 915–926 (AKDKTTERDLRT) the composition is skewed to basic and acidic residues. Residues 927-966 (TPETTTAAPKMTKETATTTEKTTESKITATTTQVTSTTTQ) show a composition bias toward low complexity. O-linked (GalNAc...) threonine glycosylation is found at Thr930 and Thr931. O-linked (GalNAc...) serine glycosylation occurs at Ser962. O-linked (GalNAc...) threonine glycans are attached at residues Thr963, Thr968, Thr975, Thr978, Thr979, and Thr980. The interval 992–1104 (ITTTEIMNKP…EDAGGAEGET (113 aa)) is disordered. The segment covering 999–1012 (NKPEETAKPKDRAT) has biased composition (basic and acidic residues). Basic residues predominate over residues 1026–1047 (KAPKKPTSTKKPKTMPRVRKPK). Residue Thr1039 is glycosylated (O-linked (GalNAc...) threonine). Positions 1048–1060 (TTPTPRKMTSTMP) are enriched in low complexity. Residues 1073–1085 (LQTTTRPNQTPNS) show a composition bias toward polar residues. A disulfide bridge connects residues Cys1146 and Cys1403. Hemopexin repeat units lie at residues 1148–1191 (GKPV…VWGI) and 1192–1239 (PSPI…FGGL). An N-linked (GlcNAc...) asparagine glycan is attached at Asn1159. Thr1161 carries an O-linked (GalNAc...) threonine glycan.

In terms of assembly, homodimer; disulfide-linked. Post-translationally, N-glycosylated. O-glycosylated; contains glycosaminoglycan chondroitin sulfate and keratan sulfate. O-glycosylated with sialylated oligosaccharides which are predominantly represented by the monosialylated core type I structure, NeuNAcalpha2-3Galbeta1-3GalNAc, with smaller amounts of disialylated O-glycans. In terms of processing, the disulfide bond between Cys-1146 and Cys-1403 is essential for protein cleavage. Post-translationally, proteolytically cleaved by cathepsin CTSG. Highly expressed in synovial tissue, cartilage and liver and weakly in heart and lung. Isoform B is expressed in kidney, lung, liver, heart and brain. Isoform C and isoform D are widely expressed.

The protein resides in the secreted. Plays a role in boundary lubrication within articulating joints. Prevents protein deposition onto cartilage from synovial fluid by controlling adhesion-dependent synovial growth and inhibiting the adhesion of synovial cells to the cartilage surface. Its function is as follows. Isoform F plays a role as a growth factor acting on the primitive cells of both hematopoietic and endothelial cell lineages. This Homo sapiens (Human) protein is Proteoglycan 4 (PRG4).